The primary structure comprises 294 residues: tRNA pseudouridine synthase B (294 aa).

The active-site Nucleophile is the aspartate 39.

Belongs to the pseudouridine synthase TruB family. Type 1 subfamily.

The enzyme catalyses uridine(55) in tRNA = pseudouridine(55) in tRNA. Its function is as follows. Responsible for synthesis of pseudouridine from uracil-55 in the psi GC loop of transfer RNAs. The sequence is that of tRNA pseudouridine synthase B from Streptococcus pyogenes serotype M6 (strain ATCC BAA-946 / MGAS10394).